The chain runs to 134 residues: UPF0715 membrane protein YoaG (134 aa).

The next 4 membrane-spanning stretches (helical) occupy residues 9 to 29 (LMTL…YSFV), 35 to 55 (IIAL…YGLF), 72 to 92 (VMYL…FFVI), and 106 to 126 (FYYM…SLIL).

It belongs to the UPF0715 family.

The protein resides in the cell membrane. This Bacillus subtilis (strain 168) protein is UPF0715 membrane protein YoaG (yoaG).